Reading from the N-terminus, the 198-residue chain is Nucleoside triphosphate pyrophosphatase (198 aa).

Catalysis depends on aspartate 72, which acts as the Proton acceptor.

The protein belongs to the Maf family. The cofactor is a divalent metal cation.

Its subcellular location is the cytoplasm. It carries out the reaction a ribonucleoside 5'-triphosphate + H2O = a ribonucleoside 5'-phosphate + diphosphate + H(+). The enzyme catalyses a 2'-deoxyribonucleoside 5'-triphosphate + H2O = a 2'-deoxyribonucleoside 5'-phosphate + diphosphate + H(+). Functionally, nucleoside triphosphate pyrophosphatase. May have a dual role in cell division arrest and in preventing the incorporation of modified nucleotides into cellular nucleic acids. In Corynebacterium diphtheriae (strain ATCC 700971 / NCTC 13129 / Biotype gravis), this protein is Nucleoside triphosphate pyrophosphatase.